A 321-amino-acid polypeptide reads, in one-letter code: Anthranilate phosphoribosyltransferase (321 aa).

5-phospho-alpha-D-ribose 1-diphosphate-binding positions include Gly72, 75-76 (GD), Thr80, 82-85 (NVST), 99-107 (KHGNVSITS), and Ser111. Gly72 is a binding site for anthranilate. Ser84 is a binding site for Mg(2+). Asn102 provides a ligand contact to anthranilate. Arg157 is a binding site for anthranilate. Mg(2+) contacts are provided by Asp216 and Glu217.

This sequence belongs to the anthranilate phosphoribosyltransferase family. As to quaternary structure, homodimer. Requires Mg(2+) as cofactor.

The catalysed reaction is N-(5-phospho-beta-D-ribosyl)anthranilate + diphosphate = 5-phospho-alpha-D-ribose 1-diphosphate + anthranilate. It functions in the pathway amino-acid biosynthesis; L-tryptophan biosynthesis; L-tryptophan from chorismate: step 2/5. Functionally, catalyzes the transfer of the phosphoribosyl group of 5-phosphorylribose-1-pyrophosphate (PRPP) to anthranilate to yield N-(5'-phosphoribosyl)-anthranilate (PRA). The protein is Anthranilate phosphoribosyltransferase of Methanococcus maripaludis (strain C6 / ATCC BAA-1332).